A 275-amino-acid polypeptide reads, in one-letter code: S-formylglutathione hydrolase (275 aa).

Residues S145, D221, and H254 each act as charge relay system in the active site.

It belongs to the esterase D family.

It carries out the reaction S-formylglutathione + H2O = formate + glutathione + H(+). Serine hydrolase involved in the detoxification of formaldehyde. Hydrolyzes S-formylglutathione to glutathione and formate. This chain is S-formylglutathione hydrolase, found in Haemophilus influenzae (strain ATCC 51907 / DSM 11121 / KW20 / Rd).